The following is a 211-amino-acid chain: uncharacterized protein (211 aa).

The disordered stretch occupies residues 155–211 (AAENASEEGDKKQIITDSGKLPETEELTETTNEDLDIKQFSPYSSESSANVSSYNKS). A compositionally biased stretch (acidic residues) spans 178–188 (TEELTETTNED). Low complexity predominate over residues 195-211 (SPYSSESSANVSSYNKS).

This is an uncharacterized protein from Schizosaccharomyces pombe (strain 972 / ATCC 24843) (Fission yeast).